Here is a 472-residue protein sequence, read N- to C-terminus: Citrate synthase, mitochondrial (472 aa).

Active-site residues include His-308, His-354, and Asp-409.

The protein belongs to the citrate synthase family. In terms of assembly, homodimer.

It is found in the mitochondrion matrix. The catalysed reaction is oxaloacetate + acetyl-CoA + H2O = citrate + CoA + H(+). Its pathway is carbohydrate metabolism; tricarboxylic acid cycle; isocitrate from oxaloacetate: step 1/2. The protein is Citrate synthase, mitochondrial (CS) of Daucus carota (Wild carrot).